Here is a 329-residue protein sequence, read N- to C-terminus: DNA-directed RNA polymerase subunit alpha (329 aa).

The interval 1–234 is alpha N-terminal domain (alpha-NTD); that stretch reads MQGSVTEFLK…EQLDAFVELR (234 aa). The segment at 248–329 is alpha C-terminal domain (alpha-CTD); it reads FDPILLRPVD…WPPASLIDND (82 aa).

Belongs to the RNA polymerase alpha chain family. Homodimer. The RNAP catalytic core consists of 2 alpha, 1 beta, 1 beta' and 1 omega subunit. When a sigma factor is associated with the core the holoenzyme is formed, which can initiate transcription.

It carries out the reaction RNA(n) + a ribonucleoside 5'-triphosphate = RNA(n+1) + diphosphate. DNA-dependent RNA polymerase catalyzes the transcription of DNA into RNA using the four ribonucleoside triphosphates as substrates. This Idiomarina loihiensis (strain ATCC BAA-735 / DSM 15497 / L2-TR) protein is DNA-directed RNA polymerase subunit alpha.